The sequence spans 434 residues: Nicotinate phosphoribosyltransferase (434 aa).

At H242 the chain carries Phosphohistidine; by autocatalysis.

It belongs to the NAPRTase family. In terms of processing, transiently phosphorylated on a His residue during the reaction cycle. Phosphorylation strongly increases the affinity for substrates and increases the rate of nicotinate D-ribonucleotide production. Dephosphorylation regenerates the low-affinity form of the enzyme, leading to product release.

It carries out the reaction nicotinate + 5-phospho-alpha-D-ribose 1-diphosphate + ATP + H2O = nicotinate beta-D-ribonucleotide + ADP + phosphate + diphosphate. It participates in cofactor biosynthesis; NAD(+) biosynthesis; nicotinate D-ribonucleotide from nicotinate: step 1/1. Its function is as follows. Catalyzes the synthesis of beta-nicotinate D-ribonucleotide from nicotinate and 5-phospho-D-ribose 1-phosphate at the expense of ATP. This is Nicotinate phosphoribosyltransferase from Brucella anthropi (strain ATCC 49188 / DSM 6882 / CCUG 24695 / JCM 21032 / LMG 3331 / NBRC 15819 / NCTC 12168 / Alc 37) (Ochrobactrum anthropi).